Reading from the N-terminus, the 173-residue chain is CKLF-like MARVEL transmembrane domain-containing protein 8 (173 aa).

The 133-residue stretch at phenylalanine 36–arginine 168 folds into the MARVEL domain. A run of 4 helical transmembrane segments spans residues proline 41–glycine 61, phenylalanine 70–valine 90, threonine 105–valine 125, and phenylalanine 147–tryptophan 167.

The protein belongs to the chemokine-like factor family.

Its subcellular location is the membrane. The chain is CKLF-like MARVEL transmembrane domain-containing protein 8 (Cmtm8) from Mus musculus (Mouse).